The following is a 151-amino-acid chain: Transcriptional regulator SyrB (151 aa).

A disordered region spans residues 1–61; that stretch reads MADESNTGPV…RYSEQERNDK (61 aa). The span at 33-48 shows a compositional bias: low complexity; that stretch reads PQKAAAEPAQPKAPAA. A compositionally biased stretch (basic and acidic residues) spans 52–61; it reads RYSEQERNDK.

It belongs to the SyrB family.

In terms of biological role, responsible for the repression of SyrM activity. The sequence is that of Transcriptional regulator SyrB (syrB) from Rhizobium meliloti (strain 1021) (Ensifer meliloti).